The primary structure comprises 175 residues: Sec-independent protein translocase protein TatB (175 aa).

The helical transmembrane segment at 1 to 21 threads the bilayer; the sequence is MLDLGLSKMALIGVVALVVLG. Positions 155–175 are disordered; it reads SGAARVARHQPASLRRPTRFF.

The protein belongs to the TatB family. In terms of assembly, the Tat system comprises two distinct complexes: a TatABC complex, containing multiple copies of TatA, TatB and TatC subunits, and a separate TatA complex, containing only TatA subunits. Substrates initially bind to the TatABC complex, which probably triggers association of the separate TatA complex to form the active translocon.

The protein localises to the cell inner membrane. Functionally, part of the twin-arginine translocation (Tat) system that transports large folded proteins containing a characteristic twin-arginine motif in their signal peptide across membranes. Together with TatC, TatB is part of a receptor directly interacting with Tat signal peptides. TatB may form an oligomeric binding site that transiently accommodates folded Tat precursor proteins before their translocation. This chain is Sec-independent protein translocase protein TatB, found in Burkholderia lata (strain ATCC 17760 / DSM 23089 / LMG 22485 / NCIMB 9086 / R18194 / 383).